Consider the following 408-residue polypeptide: Argininosuccinate synthase (408 aa).

Residues A16–S24 and A44 contribute to the ATP site. Residues Y96 and S101 each coordinate L-citrulline. G126 contributes to the ATP binding site. The L-aspartate site is built by T128, N132, and D133. An L-citrulline-binding site is contributed by N132. Residues R136, S185, S194, E270, and Y282 each coordinate L-citrulline.

Belongs to the argininosuccinate synthase family. Type 1 subfamily. As to quaternary structure, homotetramer.

It is found in the cytoplasm. The enzyme catalyses L-citrulline + L-aspartate + ATP = 2-(N(omega)-L-arginino)succinate + AMP + diphosphate + H(+). It functions in the pathway amino-acid biosynthesis; L-arginine biosynthesis; L-arginine from L-ornithine and carbamoyl phosphate: step 2/3. The protein is Argininosuccinate synthase of Shewanella woodyi (strain ATCC 51908 / MS32).